We begin with the raw amino-acid sequence, 517 residues long: Glycerol kinase (517 aa).

Thr-24 is an ADP binding site. Residues Thr-24, Thr-25, and Ser-26 each contribute to the ATP site. Thr-24 contacts sn-glycerol 3-phosphate. Arg-28 is a binding site for ADP. The sn-glycerol 3-phosphate site is built by Arg-94, Glu-95, Tyr-146, and Asp-261. Residues Arg-94, Glu-95, Tyr-146, Asp-261, and Gln-262 each coordinate glycerol. Positions 283 and 327 each coordinate ADP. ATP contacts are provided by Thr-283, Gly-327, Gln-331, and Gly-428. Residues Gly-428 and Asn-432 each coordinate ADP.

It belongs to the FGGY kinase family.

It carries out the reaction glycerol + ATP = sn-glycerol 3-phosphate + ADP + H(+). It participates in polyol metabolism; glycerol degradation via glycerol kinase pathway; sn-glycerol 3-phosphate from glycerol: step 1/1. With respect to regulation, inhibited by fructose 1,6-bisphosphate (FBP). Its function is as follows. Key enzyme in the regulation of glycerol uptake and metabolism. Catalyzes the phosphorylation of glycerol to yield sn-glycerol 3-phosphate. The chain is Glycerol kinase from Mycobacterium tuberculosis (strain ATCC 25177 / H37Ra).